Reading from the N-terminus, the 271-residue chain is Cobalt import ATP-binding protein CbiO (271 aa).

One can recognise an ABC transporter domain in the interval 2 to 236; that stretch reads LATSDLWFRY…TEAMEHAGLT (235 aa). 34–41 contributes to the ATP binding site; it reads GANGCGKS.

This sequence belongs to the ABC transporter superfamily. Cobalt importer (TC 3.A.1.18.1) family. As to quaternary structure, forms an energy-coupling factor (ECF) transporter complex composed of an ATP-binding protein (A component, CbiO), a transmembrane protein (T component, CbiQ) and 2 possible substrate-capture proteins (S components, CbiM and CbiN) of unknown stoichimetry. Expression of just CbiMN in E.coli confers some cobalt uptake.

It localises to the cell inner membrane. The protein operates within cofactor biosynthesis; adenosylcobalamin biosynthesis. In terms of biological role, part of the energy-coupling factor (ECF) transporter complex CbiMNOQ involved in cobalt import. The complex confers cobalt uptake upon expression in E.coli; can also transport nickel with a very low affinity. Presumably responsible for energy coupling to the transport system. This Salmonella typhimurium (strain LT2 / SGSC1412 / ATCC 700720) protein is Cobalt import ATP-binding protein CbiO.